Here is a 97-residue protein sequence, read N- to C-terminus: Co-chaperonin GroES (97 aa).

The protein belongs to the GroES chaperonin family. As to quaternary structure, heptamer of 7 subunits arranged in a ring. Interacts with the chaperonin GroEL.

Its subcellular location is the cytoplasm. In terms of biological role, together with the chaperonin GroEL, plays an essential role in assisting protein folding. The GroEL-GroES system forms a nano-cage that allows encapsulation of the non-native substrate proteins and provides a physical environment optimized to promote and accelerate protein folding. GroES binds to the apical surface of the GroEL ring, thereby capping the opening of the GroEL channel. The protein is Co-chaperonin GroES of Pseudomonas savastanoi pv. phaseolicola (strain 1448A / Race 6) (Pseudomonas syringae pv. phaseolicola (strain 1448A / Race 6)).